A 284-amino-acid chain; its full sequence is Tropomyosin (284 aa).

Positions 1-273 form a coiled coil; the sequence is MDAIKKKMLA…KEKYKAISDE (273 aa).

The protein belongs to the tropomyosin family. As to quaternary structure, homodimer.

Functionally, tropomyosin, in association with the troponin complex, plays a central role in the calcium dependent regulation of muscle contraction. This is Tropomyosin from Haliotis diversicolor (Abalone).